The sequence spans 395 residues: Flagellin D (395 aa).

It belongs to the bacterial flagellin family.

It is found in the secreted. Its subcellular location is the bacterial flagellum. Functionally, flagellin is the subunit protein which polymerizes to form the filaments of bacterial flagella. The protein is Flagellin D (flaD) of Rhizobium meliloti (Ensifer meliloti).